Consider the following 129-residue polypeptide: UPF0325 protein HCH_00487 (129 aa).

It belongs to the UPF0325 family.

The polypeptide is UPF0325 protein HCH_00487 (Hahella chejuensis (strain KCTC 2396)).